The sequence spans 105 residues: Large ribosomal subunit protein uL24 (105 aa).

It belongs to the universal ribosomal protein uL24 family. As to quaternary structure, part of the 50S ribosomal subunit.

In terms of biological role, one of two assembly initiator proteins, it binds directly to the 5'-end of the 23S rRNA, where it nucleates assembly of the 50S subunit. Its function is as follows. One of the proteins that surrounds the polypeptide exit tunnel on the outside of the subunit. This Mycolicibacterium vanbaalenii (strain DSM 7251 / JCM 13017 / BCRC 16820 / KCTC 9966 / NRRL B-24157 / PYR-1) (Mycobacterium vanbaalenii) protein is Large ribosomal subunit protein uL24.